A 359-amino-acid chain; its full sequence is UDP-2-acetamido-2-deoxy-3-oxo-D-glucuronate aminotransferase (359 aa).

Residues G29, Y31, and S184 each contribute to the UDP-2-acetamido-2-deoxy-alpha-D-ribo-hex-3-uluronate site. Position 185 is an N6-(pyridoxal phosphate)lysine (K185). UDP-2-acetamido-2-deoxy-alpha-D-ribo-hex-3-uluronate contacts are provided by R229, H308, and Y309.

The protein belongs to the DegT/DnrJ/EryC1 family. Homodimer. The cofactor is pyridoxal 5'-phosphate.

The catalysed reaction is UDP-2-acetamido-2-deoxy-alpha-D-ribo-hex-3-uluronate + L-glutamate = UDP-2-acetamido-3-amino-2,3-dideoxy-alpha-D-glucuronate + 2-oxoglutarate. The protein operates within bacterial outer membrane biogenesis; LPS O-antigen biosynthesis. Plays a role in the biosynthesis of B-band O antigen for serotype O5. Catalyzes the amination of UDP-2-acetamido-2-deoxy-3-oxo-D-glucuronic acid (UDP-3-oxo-D-GlcNAcA) to UDP-2-acetamido-3-amino-2,3-dideoxy-D-glucuronic acid (UDP-GlcNAc3NA), using L-glutamate as the preferred amine donor. The chain is UDP-2-acetamido-2-deoxy-3-oxo-D-glucuronate aminotransferase from Pseudomonas aeruginosa (strain ATCC 15692 / DSM 22644 / CIP 104116 / JCM 14847 / LMG 12228 / 1C / PRS 101 / PAO1).